The sequence spans 254 residues: 3-deoxy-manno-octulosonate cytidylyltransferase (254 aa).

Belongs to the KdsB family.

It localises to the cytoplasm. It carries out the reaction 3-deoxy-alpha-D-manno-oct-2-ulosonate + CTP = CMP-3-deoxy-beta-D-manno-octulosonate + diphosphate. Its pathway is nucleotide-sugar biosynthesis; CMP-3-deoxy-D-manno-octulosonate biosynthesis; CMP-3-deoxy-D-manno-octulosonate from 3-deoxy-D-manno-octulosonate and CTP: step 1/1. The protein operates within bacterial outer membrane biogenesis; lipopolysaccharide biosynthesis. Its function is as follows. Activates KDO (a required 8-carbon sugar) for incorporation into bacterial lipopolysaccharide in Gram-negative bacteria. This Pseudomonas putida (strain W619) protein is 3-deoxy-manno-octulosonate cytidylyltransferase.